The chain runs to 323 residues: Cyclin-H (323 aa).

The interval 296–323 (GYEDDGYISKKPKTEEDEWTDEDFGDSL) is disordered. Residues 310–323 (EEDEWTDEDFGDSL) are compositionally biased toward acidic residues.

The protein belongs to the cyclin family. Cyclin C subfamily. As to quaternary structure, associates primarily with CDK7 and MAT1 to form the CAK complex. CAK can further associate with the core-TFIIH to form the TFIIH basal transcription factor.

The protein resides in the nucleus. In terms of biological role, regulates CDK7, the catalytic subunit of the CDK-activating kinase (CAK) enzymatic complex. CAK activates the cyclin-associated kinases CDK1, CDK2, CDK4 and CDK6 by threonine phosphorylation. CAK complexed to the core-TFIIH basal transcription factor activates RNA polymerase II by serine phosphorylation of the repetitive C-terminal domain (CTD) of its large subunit (POLR2A), allowing its escape from the promoter and elongation of the transcripts. Involved in cell cycle control and in RNA transcription by RNA polymerase II. Its expression and activity are constant throughout the cell cycle. This is Cyclin-H (ccnh) from Xenopus laevis (African clawed frog).